The primary structure comprises 388 residues: Succinate--CoA ligase [ADP-forming] subunit beta (388 aa).

Positions 9-244 (KQLFAEYGLP…PSQDDPREAH (236 aa)) constitute an ATP-grasp domain. Residues lysine 46, 53 to 55 (GRG), glutamate 99, threonine 102, and glutamate 107 contribute to the ATP site. Positions 199 and 213 each coordinate Mg(2+). Residues asparagine 264 and 321–323 (GIV) contribute to the substrate site.

Belongs to the succinate/malate CoA ligase beta subunit family. In terms of assembly, heterotetramer of two alpha and two beta subunits. Requires Mg(2+) as cofactor.

The enzyme catalyses succinate + ATP + CoA = succinyl-CoA + ADP + phosphate. The catalysed reaction is GTP + succinate + CoA = succinyl-CoA + GDP + phosphate. The protein operates within carbohydrate metabolism; tricarboxylic acid cycle; succinate from succinyl-CoA (ligase route): step 1/1. Its function is as follows. Succinyl-CoA synthetase functions in the citric acid cycle (TCA), coupling the hydrolysis of succinyl-CoA to the synthesis of either ATP or GTP and thus represents the only step of substrate-level phosphorylation in the TCA. The beta subunit provides nucleotide specificity of the enzyme and binds the substrate succinate, while the binding sites for coenzyme A and phosphate are found in the alpha subunit. In Pseudomonas syringae pv. syringae (strain B728a), this protein is Succinate--CoA ligase [ADP-forming] subunit beta.